The sequence spans 320 residues: Replication factor C small subunit 2 (320 aa).

Residue 44 to 51 (GPPGTGKT) participates in ATP binding.

This sequence belongs to the activator 1 small subunits family. RfcS subfamily. In terms of assembly, heteromultimer composed of small subunits (RfcS) and large subunits (RfcL).

Part of the RFC clamp loader complex which loads the PCNA sliding clamp onto DNA. The chain is Replication factor C small subunit 2 from Pyrobaculum islandicum (strain DSM 4184 / JCM 9189 / GEO3).